Reading from the N-terminus, the 255-residue chain is MATIKEIKTQLLSVYTLDDPLLVELSEDPRTGVQRLIKHKQKEINQLRLKEEAFQARFTLERELWSNGIDLVAGIDEVGRGCLAGPVVTASVVLDETFDLIDVNDSKQLSSELREELYAKILTEAVSVGIGVCSNQKIDEVNILNATKLAMREAVGNLNVTPQHLLIDAVNAPIEIPKTVMFKGDSKSISIAAASIVAKVYRDHLMRSYAALYPGYGFDKNVGYGTKQHIEGLKTYGVTPIHRQTFEPVPEFLIK.

One can recognise an RNase H type-2 domain in the interval 70-255 (DLVAGIDEVG…FEPVPEFLIK (186 aa)). Positions 76, 77, and 168 each coordinate a divalent metal cation.

This sequence belongs to the RNase HII family. It depends on Mn(2+) as a cofactor. Mg(2+) is required as a cofactor.

Its subcellular location is the cytoplasm. The enzyme catalyses Endonucleolytic cleavage to 5'-phosphomonoester.. Functionally, endonuclease that specifically degrades the RNA of RNA-DNA hybrids. This Pediococcus pentosaceus (strain ATCC 25745 / CCUG 21536 / LMG 10740 / 183-1w) protein is Ribonuclease HII.